A 306-amino-acid chain; its full sequence is Formamidopyrimidine-DNA glycosylase (306 aa).

Catalysis depends on proline 2, which acts as the Schiff-base intermediate with DNA. The active-site Proton donor is glutamate 3. Lysine 58 functions as the Proton donor; for beta-elimination activity in the catalytic mechanism. Histidine 114, arginine 136, and lysine 179 together coordinate DNA. An FPG-type zinc finger spans residues 270 to 306; sequence SVYDREGEACRTSGCRGTVERIVQAGRSTFYCPHCQK. Arginine 296 functions as the Proton donor; for delta-elimination activity in the catalytic mechanism.

It belongs to the FPG family. In terms of assembly, monomer. It depends on Zn(2+) as a cofactor.

It catalyses the reaction Hydrolysis of DNA containing ring-opened 7-methylguanine residues, releasing 2,6-diamino-4-hydroxy-5-(N-methyl)formamidopyrimidine.. The catalysed reaction is 2'-deoxyribonucleotide-(2'-deoxyribose 5'-phosphate)-2'-deoxyribonucleotide-DNA = a 3'-end 2'-deoxyribonucleotide-(2,3-dehydro-2,3-deoxyribose 5'-phosphate)-DNA + a 5'-end 5'-phospho-2'-deoxyribonucleoside-DNA + H(+). Its function is as follows. Involved in base excision repair of DNA damaged by oxidation or by mutagenic agents. Acts as a DNA glycosylase that recognizes and removes damaged bases. Has a preference for oxidized purines, such as 7,8-dihydro-8-oxoguanine (8-oxoG). Has AP (apurinic/apyrimidinic) lyase activity and introduces nicks in the DNA strand. Cleaves the DNA backbone by beta-delta elimination to generate a single-strand break at the site of the removed base with both 3'- and 5'-phosphates. The chain is Formamidopyrimidine-DNA glycosylase from Sinorhizobium medicae (strain WSM419) (Ensifer medicae).